The chain runs to 379 residues: MTAPAGFLPRVGRLIAVALTAVFLLAPTGAEAASRIKDLADFEGVRDNILVGYGLVVGLKGTGDKLDDVTFTKESLIGMLERLGVNTREGKLDPDNVAAVMVTGTLPPFARQGSRIDVTISALGTAKSLAGGTLMVTPLIGADGEVYAVAQGQAQIGGYAVQGQSASVQKGVPTSGRIPNGALVEAEVPFNLSAMESVKISLRNPDFTTARRIAQAINAFLGTELARPLDPGTVLVAVTAGYEGNAVALLTDIEQLLVEPDTVARVVIDEATGTIVIGEKVRINTVAIAQGNLTIRVTETPQVSQPAPFSQGGQTAVVPRTNIQVDEGKDNKLTVVNGGVNLQDLVNSLNALGVGPRDMISILQAIKSAGAMQAEIQVM.

A signal peptide spans 1–32 (MTAPAGFLPRVGRLIAVALTAVFLLAPTGAEA).

The protein belongs to the FlgI family. As to quaternary structure, the basal body constitutes a major portion of the flagellar organelle and consists of four rings (L,P,S, and M) mounted on a central rod.

It localises to the periplasm. The protein resides in the bacterial flagellum basal body. Its function is as follows. Assembles around the rod to form the L-ring and probably protects the motor/basal body from shearing forces during rotation. The polypeptide is Flagellar P-ring protein (Rhodospirillum rubrum (strain ATCC 11170 / ATH 1.1.1 / DSM 467 / LMG 4362 / NCIMB 8255 / S1)).